The chain runs to 959 residues: rDNA transcriptional regulator pol5 (959 aa).

A phosphoserine mark is found at serine 742 and serine 743. Positions 936–959 are disordered; it reads HQQTSTAASSPQKTGHHENEKTNH. Polar residues predominate over residues 937–948; sequence QQTSTAASSPQK. A compositionally biased stretch (basic and acidic residues) spans 950 to 959; sequence GHHENEKTNH.

The protein belongs to the MYBBP1A family. As to quaternary structure, interacts with cdc10.

It localises to the nucleus. In terms of biological role, plays an important role in the regulation of rRNA transcription. Binds to rDNA promoter fragments. This chain is rDNA transcriptional regulator pol5 (pol5), found in Schizosaccharomyces pombe (strain 972 / ATCC 24843) (Fission yeast).